Reading from the N-terminus, the 44-residue chain is Large ribosomal subunit protein bL34 (44 aa).

The segment at 21–44 is disordered; sequence RMDTSGGRRILSARRRKGRKTISA. Positions 31–44 are enriched in basic residues; the sequence is LSARRRKGRKTISA.

It belongs to the bacterial ribosomal protein bL34 family.

The protein is Large ribosomal subunit protein bL34 of Endomicrobium trichonymphae.